Consider the following 1217-residue polypeptide: Rho family-interacting cell polarization regulator 1 (1217 aa).

Ser-22 is modified (phosphoserine). A coiled-coil region spans residues 83–112 (RGLTAYLEVHQQEQEKLQRQIKESKRNSRL). Phosphoserine is present on residues Ser-345 and Ser-347. Thr-351 is modified (phosphothreonine). Positions 371–413 (NGTAWSLSSESSDDSSSPQLSGTARYSSTPKPLVQQPEPLPVQ) are disordered. Composition is skewed to low complexity over residues 376 to 391 (SLSSESSDDSSSPQLS) and 400 to 413 (PKPLVQQPEPLPVQ). A phosphoserine mark is found at Ser-452 and Ser-455. The disordered stretch occupies residues 565-762 (TSTTVGSTHK…SPSSIVPEPQ (198 aa)). Positions 579–594 (PLTSTGSIPSVTDSIQ) are enriched in polar residues. Residues 595-649 (TTTSPTHTTPSPTHTTVSPTHSTPSPTHTTVSPSNAALSPSNATPSLSHSTTSPT) are compositionally biased toward low complexity. Residues 650 to 661 (QKATMSTHTTSA) show a composition bias toward polar residues. The segment covering 664 to 695 (PVQTTTSPISTTVSPSPSVDTAIISSSSAVPS) has biased composition (low complexity). Residues 720-729 (ACTSSPSLAS) show a composition bias toward polar residues. Ser-742 is modified (phosphoserine). A coiled-coil region spans residues 786–828 (RRLEEALRTLMAALDDYRGQFPELQGLEQEVTRLESLLMQRQG). Residues 850–874 (FLNDDEDEDNDSPGDRPTSSPEVVA) form a disordered region. Over residues 852–861 (NDDEDEDNDS) the composition is skewed to acidic residues. Ser-868 and Ser-869 each carry phosphoserine.

Belongs to the RIPOR family. In terms of assembly, interacts (via N-terminus) with RHOA (GTP-bound form); this interaction links active RHOA to STK24 and STK26 kinases. Interacts with RHOB. Interacts with RHOC. Interacts (via C-terminus) with PDCD10; this interaction occurs in a Rho-independent manner. Interacts (via C-terminus) with STK24; this interaction occurs in a PDCD10-dependent and Rho-independent manner. Interacts (via C-terminus) with STK26; this interaction occurs in a PDCD10-dependent and Rho-independent manner. Interacts (via N-terminus) with 14-3-3 proteins; these interactions occur in a Rho-dependent manner.

It is found in the cytoplasm. The protein resides in the golgi apparatus. Its function is as follows. Downstream effector protein for Rho-type small GTPases that plays a role in cell polarity and directional migration. Acts as an adapter protein, linking active Rho proteins to STK24 and STK26 kinases, and hence positively regulates Golgi reorientation in polarized cell migration upon Rho activation. Involved in the subcellular relocation of STK26 from the Golgi to cytoplasm punctae in a Rho- and PDCD10-dependent manner upon serum stimulation. This Rattus norvegicus (Rat) protein is Rho family-interacting cell polarization regulator 1.